An 89-amino-acid chain; its full sequence is Small ribosomal subunit protein uS15 (89 aa).

The protein belongs to the universal ribosomal protein uS15 family. In terms of assembly, part of the 30S ribosomal subunit. Forms a bridge to the 50S subunit in the 70S ribosome, contacting the 23S rRNA.

Its function is as follows. One of the primary rRNA binding proteins, it binds directly to 16S rRNA where it helps nucleate assembly of the platform of the 30S subunit by binding and bridging several RNA helices of the 16S rRNA. In terms of biological role, forms an intersubunit bridge (bridge B4) with the 23S rRNA of the 50S subunit in the ribosome. This Shewanella piezotolerans (strain WP3 / JCM 13877) protein is Small ribosomal subunit protein uS15.